Consider the following 132-residue polypeptide: uncharacterized protein (132 aa).

A helical membrane pass occupies residues 66 to 86 (LPPMLLVLAALFVKGLIPLVL).

Its subcellular location is the membrane. This is an uncharacterized protein from Saccharomyces cerevisiae (strain ATCC 204508 / S288c) (Baker's yeast).